The primary structure comprises 296 residues: tRNA pseudouridine synthase B (296 aa).

Asp38 functions as the Nucleophile in the catalytic mechanism.

It belongs to the pseudouridine synthase TruB family. Type 1 subfamily.

The catalysed reaction is uridine(55) in tRNA = pseudouridine(55) in tRNA. In terms of biological role, responsible for synthesis of pseudouridine from uracil-55 in the psi GC loop of transfer RNAs. This Synechocystis sp. (strain ATCC 27184 / PCC 6803 / Kazusa) protein is tRNA pseudouridine synthase B.